A 542-amino-acid polypeptide reads, in one-letter code: Phosphoenolpyruvate carboxykinase (ATP) (542 aa).

3 residues coordinate substrate: Arg67, Tyr208, and Lys214. Residues Lys214, His233, and 249 to 257 (GLSGTGKTT) contribute to the ATP site. Mn(2+) is bound by residues Lys214 and His233. Asp270 is a binding site for Mn(2+). ATP-binding positions include Glu298, Arg334, 450–451 (RI), and Thr456. Arg334 is a substrate binding site.

It belongs to the phosphoenolpyruvate carboxykinase (ATP) family. As to quaternary structure, monomer. Mn(2+) is required as a cofactor.

Its subcellular location is the cytoplasm. The enzyme catalyses oxaloacetate + ATP = phosphoenolpyruvate + ADP + CO2. Its pathway is carbohydrate biosynthesis; gluconeogenesis. Its function is as follows. Involved in the gluconeogenesis. Catalyzes the conversion of oxaloacetate (OAA) to phosphoenolpyruvate (PEP) through direct phosphoryl transfer between the nucleoside triphosphate and OAA. The sequence is that of Phosphoenolpyruvate carboxykinase (ATP) from Vibrio campbellii (strain ATCC BAA-1116).